The primary structure comprises 300 residues: F-box protein PP2-A15 (300 aa).

The region spanning 17-63 is the F-box domain; the sequence is MGPGLGDIPESCVACVFMYLTPPEICNLAGLNRSFRGAASSDSVWEK.

The polypeptide is F-box protein PP2-A15 (PP2A15) (Arabidopsis thaliana (Mouse-ear cress)).